The chain runs to 739 residues: Phosphoribosylformylglycinamidine synthase subunit PurL (739 aa).

Histidine 54 is a catalytic residue. The ATP site is built by tyrosine 57 and lysine 96. Residue glutamate 98 coordinates Mg(2+). Substrate is bound by residues 99-102 (SHNH) and arginine 121. Histidine 100 serves as the catalytic Proton acceptor. Aspartate 122 provides a ligand contact to Mg(2+). A substrate-binding site is contributed by glutamine 245. Aspartate 273 is a binding site for Mg(2+). 317-319 (ESQ) is a substrate binding site. 2 residues coordinate ATP: aspartate 500 and glycine 537. Asparagine 538 lines the Mg(2+) pocket. Serine 540 contributes to the substrate binding site.

Belongs to the FGAMS family. As to quaternary structure, monomer. Part of the FGAM synthase complex composed of 1 PurL, 1 PurQ and 2 PurS subunits.

It localises to the cytoplasm. It carries out the reaction N(2)-formyl-N(1)-(5-phospho-beta-D-ribosyl)glycinamide + L-glutamine + ATP + H2O = 2-formamido-N(1)-(5-O-phospho-beta-D-ribosyl)acetamidine + L-glutamate + ADP + phosphate + H(+). It participates in purine metabolism; IMP biosynthesis via de novo pathway; 5-amino-1-(5-phospho-D-ribosyl)imidazole from N(2)-formyl-N(1)-(5-phospho-D-ribosyl)glycinamide: step 1/2. In terms of biological role, part of the phosphoribosylformylglycinamidine synthase complex involved in the purines biosynthetic pathway. Catalyzes the ATP-dependent conversion of formylglycinamide ribonucleotide (FGAR) and glutamine to yield formylglycinamidine ribonucleotide (FGAM) and glutamate. The FGAM synthase complex is composed of three subunits. PurQ produces an ammonia molecule by converting glutamine to glutamate. PurL transfers the ammonia molecule to FGAR to form FGAM in an ATP-dependent manner. PurS interacts with PurQ and PurL and is thought to assist in the transfer of the ammonia molecule from PurQ to PurL. This chain is Phosphoribosylformylglycinamidine synthase subunit PurL, found in Bacillus mycoides (strain KBAB4) (Bacillus weihenstephanensis).